A 1147-amino-acid polypeptide reads, in one-letter code: Multiple epidermal growth factor-like domains protein 10 (1147 aa).

Positions 1–25 (MAISSSSCLGLICSLLCHWVGTASS) are cleaved as a signal peptide. The necessary for interaction with AP2M1, self-assembly and formation of the irregular, mosaic-like adhesion pattern stretch occupies residues 1-857 (MAISSSSCLG…ALPADSYQIG (857 aa)). The Extracellular portion of the chain corresponds to 26–857 (LNLEDPNVCS…ALPADSYQIG (832 aa)). Residues 30 to 107 (DPNVCSHWES…FYESRDMCVP (78 aa)) enclose the EMI domain. Cystine bridges form between Cys-34-Cys-95, Cys-60-Cys-69, Cys-94-Cys-105, Cys-109-Cys-124, Cys-126-Cys-135, Cys-148-Cys-160, Cys-154-Cys-167, Cys-169-Cys-178, Cys-191-Cys-203, Cys-197-Cys-210, Cys-212-Cys-221, Cys-234-Cys-246, Cys-240-Cys-253, Cys-255-Cys-264, Cys-281-Cys-289, Cys-283-Cys-296, Cys-298-Cys-307, Cys-320-Cys-332, Cys-326-Cys-339, Cys-341-Cys-350, Cys-409-Cys-421, Cys-415-Cys-428, Cys-430-Cys-439, Cys-456-Cys-464, Cys-458-Cys-471, Cys-473-Cys-482, Cys-495-Cys-507, Cys-501-Cys-514, Cys-516-Cys-525, Cys-542-Cys-550, Cys-544-Cys-557, Cys-559-Cys-568, Cys-581-Cys-593, Cys-587-Cys-600, Cys-602-Cys-611, Cys-669-Cys-681, Cys-675-Cys-688, Cys-690-Cys-699, Cys-716-Cys-724, Cys-718-Cys-731, Cys-733-Cys-742, Cys-755-Cys-767, Cys-761-Cys-774, Cys-776-Cys-785, Cys-802-Cys-810, Cys-804-Cys-817, and Cys-819-Cys-828. EGF-like domains lie at 101–136 (SRDM…TNCS), 144–179 (WGPH…WRCE), 187–222 (YGND…AFCE), 230–265 (HGPH…TVCG), 278–308 (SQEC…ERCQ), 316–351 (YGVR…ELCE), 405–440 (YGEA…TDCS), 453–483 (SSRC…VDCS), 491–526 (WGFG…AKCE), 539–569 (AERC…VHCD), 577–612 (WGPN…TTCQ), 665–700 (FGKN…SDCS), 713–743 (IHTC…LYCT), 751–786 (YGKD…RHCE), and 799–829 (RQIC…ARCD). Asn-134 is a glycosylation site (N-linked (GlcNAc...) asparagine). Residue Asn-496 is glycosylated (N-linked (GlcNAc...) asparagine). A helical transmembrane segment spans residues 858–878 (AIAGIVVLVLVVLFLLALFII). Over 879 to 1147 (YRHKQKRKES…STSSSSSSSE (269 aa)) the chain is Cytoplasmic. The interval 945 to 1147 (RDRMTIAKSK…STSSSSSSSE (203 aa)) is necessary for formation of large intracellular vacuoles. Tyr-1030 carries the post-translational modification Phosphotyrosine. The interval 1093 to 1147 (HVTQDPYDLPKNSHIPCHYDLLPVRDSSSSPKREDGGGSNSTSSNSTSSSSSSSE) is disordered. A compositionally biased stretch (low complexity) spans 1132–1147 (NSTSSNSTSSSSSSSE).

The protein belongs to the MEGF family. In terms of assembly, homomer. Interacts with GULP1 and ABCA1. Interacts with AP2M1. Does not interact with MEGF11. Binds with high affinity to complement C1q. Interacts (via the cytoplasmic domain) with NOTCH1 (via NICD domain). In terms of processing, ubiquitinated; mono- and polyubiquitinated forms are detected. Phosphorylated on tyrosine residues. Phosphorylation at Tyr-1030 may be important for muscle cell proliferation. Expressed in cerebellum (at protein level). Expressed in kidney, stellate cells of the cerebellum and macrophage cell lines.

The protein resides in the cell membrane. It localises to the cell projection. It is found in the phagocytic cup. Functionally, membrane receptor involved in phagocytosis by macrophages and astrocytes of apoptotic cells. Receptor for C1q, an eat-me signal, that binds phosphatidylserine expressed on the surface of apoptotic cells. Cooperates with ABCA1 within the process of engulfment. Promotes the formation of large intracellular vacuoles and may be responsible for the uptake of amyloid-beta peptides. Necessary for astrocyte-dependent apoptotic neuron clearance in the developing cerebellum. Plays a role in muscle cell proliferation, adhesion and motility. Is also an essential factor in the regulation of myogenesis. Controls the balance between skeletal muscle satellite cells proliferation and differentiation through regulation of the notch signaling pathway. May also function in the mosaic spacing of specific neuron subtypes in the retina through homotypic retinal neuron repulsion. Mosaics provide a mechanism to distribute each cell type evenly across the retina, ensuring that all parts of the visual field have access to a full set of processing elements. In Mus musculus (Mouse), this protein is Multiple epidermal growth factor-like domains protein 10.